We begin with the raw amino-acid sequence, 95 residues long: Small ribosomal subunit protein uS17 (95 aa).

It belongs to the universal ribosomal protein uS17 family. As to quaternary structure, part of the 30S ribosomal subunit.

In terms of biological role, one of the primary rRNA binding proteins, it binds specifically to the 5'-end of 16S ribosomal RNA. This Mycoplasmopsis synoviae (strain 53) (Mycoplasma synoviae) protein is Small ribosomal subunit protein uS17.